The following is a 592-amino-acid chain: Aspartate--tRNA(Asp/Asn) ligase (592 aa).

L-aspartate is bound at residue Glu175. The segment at 199 to 202 (QLFK) is aspartate. Arg221 provides a ligand contact to L-aspartate. ATP-binding positions include 221–223 (RDE) and Gln230. Residue His447 participates in L-aspartate binding. Glu481 provides a ligand contact to ATP. Arg488 is an L-aspartate binding site. 533–536 (GIDR) is an ATP binding site.

The protein belongs to the class-II aminoacyl-tRNA synthetase family. Type 1 subfamily. Homodimer.

It is found in the cytoplasm. It carries out the reaction tRNA(Asx) + L-aspartate + ATP = L-aspartyl-tRNA(Asx) + AMP + diphosphate. Its function is as follows. Aspartyl-tRNA synthetase with relaxed tRNA specificity since it is able to aspartylate not only its cognate tRNA(Asp) but also tRNA(Asn). Reaction proceeds in two steps: L-aspartate is first activated by ATP to form Asp-AMP and then transferred to the acceptor end of tRNA(Asp/Asn). The protein is Aspartate--tRNA(Asp/Asn) ligase of Dictyoglomus turgidum (strain DSM 6724 / Z-1310).